The sequence spans 138 residues: uncharacterized protein (138 aa).

This is an uncharacterized protein from Schizosaccharomyces pombe (strain 972 / ATCC 24843) (Fission yeast).